A 42-amino-acid polypeptide reads, in one-letter code: Phospholipase A1 (42 aa).

Belongs to the AB hydrolase superfamily. Lipase family. Post-translationally, contains six disulfide bonds. Expressed by the venom gland.

The protein resides in the secreted. The catalysed reaction is a 1,2-diacyl-sn-glycero-3-phosphocholine + H2O = a 2-acyl-sn-glycero-3-phosphocholine + a fatty acid + H(+). Catalyzes the hydrolysis of phosphatidylcholine with phospholipase A1 activity. May act as an allergen and induce hemolytic activity. The polypeptide is Phospholipase A1 (Polistes gallicus (Paper wasp)).